Here is a 570-residue protein sequence, read N- to C-terminus: PTS system lactose-specific EIICB component (570 aa).

In terms of domain architecture, PTS EIIC type-3 spans 9 to 410 (IEKGKPFFEK…VVDIIIYYPF (402 aa)). The next 9 membrane-spanning stretches (helical) occupy residues 31 to 51 (GFIS…IAYV), 65 to 85 (AILM…VAGT), 104 to 124 (INFI…ASDP), 133 to 153 (AFMG…TVIV), 178 to 198 (FKDL…DLVI), 223 to 243 (GWIG…VGIH), 283 to 303 (MFIV…MFMW), 340 to 360 (VFFI…KLFV), and 382 to 402 (IIMG…LIVV). One can recognise a PTS EIIB type-3 domain in the interval 467-570 (QTNVLVLCAG…LDFVQQQFEN (104 aa)). The Phosphocysteine intermediate; for EIIB activity role is filled by cysteine 474. Cysteine 474 bears the Phosphocysteine; by EIIA mark.

It is found in the cell membrane. It carries out the reaction lactose(out) + N(pros)-phospho-L-histidyl-[protein] = lactose 6-phosphate(in) + L-histidyl-[protein]. Its function is as follows. The phosphoenolpyruvate-dependent sugar phosphotransferase system (sugar PTS), a major carbohydrate active transport system, catalyzes the phosphorylation of incoming sugar substrates concomitantly with their translocation across the cell membrane. The enzyme II LacEF PTS system is involved in lactose transport. This is PTS system lactose-specific EIICB component from Staphylococcus aureus (strain N315).